A 194-amino-acid polypeptide reads, in one-letter code: Troponin I 4 (194 aa).

The interval 1-27 (MSDVDADEARKMAERERKKEEVRKRLE) is disordered. Residues 7 to 27 (DEARKMAERERKKEEVRKRLE) show a composition bias toward basic and acidic residues.

Belongs to the troponin I family. As to expression, expression is detected only in pharyngeal muscle cells from embryos to adults.

In terms of biological role, troponin I is the inhibitory subunit of troponin, the thin filament regulatory complex which confers calcium-sensitivity to muscle actomyosin ATPase activity. The polypeptide is Troponin I 4 (tni-4) (Caenorhabditis elegans).